The following is a 420-amino-acid chain: Phosphoribosylamine--glycine ligase (420 aa).

The ATP-grasp domain maps to 108–314; sequence KEIMVKYGVS…FAQNITDILD (207 aa). Residue 134–195 participates in ATP binding; that stretch reads IEKHGAPIVV…EEFLEGEEFS (62 aa). Residues Glu284 and Asn286 each contribute to the Mg(2+) site.

The protein belongs to the GARS family. It depends on Mg(2+) as a cofactor. Mn(2+) is required as a cofactor.

The enzyme catalyses 5-phospho-beta-D-ribosylamine + glycine + ATP = N(1)-(5-phospho-beta-D-ribosyl)glycinamide + ADP + phosphate + H(+). Its pathway is purine metabolism; IMP biosynthesis via de novo pathway; N(1)-(5-phospho-D-ribosyl)glycinamide from 5-phospho-alpha-D-ribose 1-diphosphate: step 2/2. This Streptococcus pneumoniae (strain ATCC BAA-255 / R6) protein is Phosphoribosylamine--glycine ligase.